The primary structure comprises 299 residues: N-acetylmuramic acid 6-phosphate etherase (299 aa).

Positions 55-218 (CINCLEKNGR…STTVMVKMGK (164 aa)) constitute an SIS domain. Glutamate 83 (proton donor) is an active-site residue. Glutamate 114 is an active-site residue.

Belongs to the GCKR-like family. MurNAc-6-P etherase subfamily. As to quaternary structure, homodimer.

The catalysed reaction is N-acetyl-D-muramate 6-phosphate + H2O = N-acetyl-D-glucosamine 6-phosphate + (R)-lactate. Its pathway is amino-sugar metabolism; N-acetylmuramate degradation. Specifically catalyzes the cleavage of the D-lactyl ether substituent of MurNAc 6-phosphate, producing GlcNAc 6-phosphate and D-lactate. This chain is N-acetylmuramic acid 6-phosphate etherase, found in Pseudothermotoga lettingae (strain ATCC BAA-301 / DSM 14385 / NBRC 107922 / TMO) (Thermotoga lettingae).